Here is a 284-residue protein sequence, read N- to C-terminus: uncharacterized protein (284 aa).

Residues 1-23 (MKRGCAIAVMICGLITSVSAASA) form the signal peptide.

This sequence belongs to the surface antigen msp4 family.

This is an uncharacterized protein from Brucella abortus (strain 2308).